The primary structure comprises 307 residues: Mitochondrial glycine transporter (307 aa).

3 Solcar repeats span residues 8-87, 115-199, and 221-305; these read PRNS…MRSS, LTMY…SKQL, and TSTT…LVKR. A run of 6 helical transmembrane segments spans residues 14–39, 62–88, 121–146, 174–197, 225–251, and 280–298; these read LIGGFFGGLTSAVALQPLDLLKTRIQ, GTLPSALRTSIGSALYLSCLNLMRSSL, LLTGAFARGLVGYITMPITVIKVRYE, GFGATCLRDAPYAGLYVLLYEKSK, VNTTSAVLSASLATTVTAPFDTIKTRM, and GLSMRLARKALSAGIAWGI.

This sequence belongs to the mitochondrial carrier (TC 2.A.29) family. SLC25A38 subfamily.

It is found in the mitochondrion inner membrane. The catalysed reaction is glycine(in) = glycine(out). Functionally, mitochondrial glycine transporter that imports glycine into the mitochondrial matrix. Plays an important role in providing glycine for the first enzymatic step in heme biosynthesis, the condensation of glycine with succinyl-CoA to produce 5-aminolevulinate (ALA) in the mitochondrial matrix. The chain is Mitochondrial glycine transporter from Saccharomyces cerevisiae (strain RM11-1a) (Baker's yeast).